We begin with the raw amino-acid sequence, 436 residues long: 3-oxo-tetronate kinase (436 aa).

Residues Ser-272, 372 to 375 (GGET), and Gly-415 contribute to the ATP site.

This sequence belongs to the four-carbon acid sugar kinase family.

The enzyme catalyses 3-dehydro-L-erythronate + ATP = 3-dehydro-4-O-phospho-L-erythronate + ADP + H(+). It carries out the reaction 3-dehydro-D-erythronate + ATP = 3-dehydro-4-O-phospho-D-erythronate + ADP + H(+). Catalyzes the ATP-dependent phosphorylation of 3-oxo-tetronate to 3-oxo-tetronate 4-phosphate. The protein is 3-oxo-tetronate kinase of Brucella melitensis biotype 1 (strain ATCC 23456 / CCUG 17765 / NCTC 10094 / 16M).